We begin with the raw amino-acid sequence, 190 residues long: Large ribosomal subunit protein bL9 (190 aa).

It belongs to the bacterial ribosomal protein bL9 family.

Functionally, binds to the 23S rRNA. The protein is Large ribosomal subunit protein bL9 of Methylobacterium radiotolerans (strain ATCC 27329 / DSM 1819 / JCM 2831 / NBRC 15690 / NCIMB 10815 / 0-1).